The primary structure comprises 624 residues: Diatom spindle kinesin-1 (624 aa).

The tract at residues 1-59 is disordered; the sequence is MNAANRRKSTSTVGITGRKDATRMKIEQMEKERKERRKTMMQRKEARKQEHMKNIEAGN. A globular region spans residues 1–85; sequence MNAANRRKST…QENKIGDKSP (85 aa). Composition is skewed to basic and acidic residues over residues 17 to 33 and 42 to 54; these read GRKDATRMKIEQMEKER and QRKEARKQEHMKN. In terms of domain architecture, Kinesin motor spans 95-411; that stretch reads NICIAVRKRP…LRYADRIKEQ (317 aa). 186–193 serves as a coordination point for ATP; that stretch reads GQTGSGKT. A coiled-coil region spans residues 426–624; that stretch reads SNREIMPSKE…LARQVQLTQY (199 aa). The span at 478–511 shows a compositional bias: acidic residues; that stretch reads VDEEEADDEEGDYEEESEDLDYEDSEGQDYEEAV. A disordered region spans residues 478–528; the sequence is VDEEEADDEEGDYEEESEDLDYEDSEGQDYEEAVESQYDHSQEAQEGEEEL.

This sequence belongs to the TRAFAC class myosin-kinesin ATPase superfamily. Kinesin family. MCAK/KIF2 subfamily.

It is found in the cytoplasm. It localises to the cytoskeleton. Its function is as follows. Involved in anaphase spindle elongation. The protein is Diatom spindle kinesin-1 (DSK1) of Cylindrotheca fusiformis (Marine diatom).